We begin with the raw amino-acid sequence, 448 residues long: Homogentisate 1,2-dioxygenase (448 aa).

The active-site Proton acceptor is His-302. His-345 and Glu-351 together coordinate Fe cation. Homogentisate is bound by residues Tyr-360 and His-381. His-381 is a Fe cation binding site.

Belongs to the homogentisate dioxygenase family. Hexamer; dimer of trimers. Requires Fe cation as cofactor.

The catalysed reaction is homogentisate + O2 = 4-maleylacetoacetate + H(+). The protein operates within amino-acid degradation; L-phenylalanine degradation; acetoacetate and fumarate from L-phenylalanine: step 4/6. Its function is as follows. Involved in the catabolism of homogentisate (2,5-dihydroxyphenylacetate or 2,5-OH-PhAc), a central intermediate in the degradation of phenylalanine and tyrosine. Catalyzes the oxidative ring cleavage of the aromatic ring of homogentisate to yield maleylacetoacetate. The polypeptide is Homogentisate 1,2-dioxygenase (Ralstonia pickettii (strain 12J)).